Consider the following 583-residue polypeptide: MSYGEIEGKFLGPREEVTSEPRCKKLKSTTESYVFHNHSNADFHRIQEKTGNDWVPVTIIDVRGHSYLQENKIKTTDLHRPLHDEMPGNRPDVIESIDSQVLQEARPPLVSADDEIYSTSKAFIGPIYKPPEKKKRNEGRNEAHVLNGINDRGGQKEKQKFNSEKSEIDNELFQFYKEIEELEKEKDGFENSCKESEPSQEQFVPFYEGHNNGLLKPDEEKKDLSNKAMPSHCDYQQNLGNEPDKYPCNGQVIPTFCDTSFTSFRPEWQSVYPFIVPYGPPLPSLNYHLNIQRFSGPPNPPSNIFQAQDDSQIQNGYYVNNCHVNWNCMTFDQNNEYTDCSENRSSVHPSGNGCSMQDRYVSNGFCEVRERCWKDHCMDKHNGTDRFVNQQFQEEKLNKLQKLLILLRGLPGSGKTTLSRILLGQNRDGIVFSTDDYFHHQDGYRYNVNQLGDAHDWNQNRAKQAIDQGRSPVIIDNTNIQAWEMKPYVEVAIGKGYRVEFHEPETWWKFDPEELEKRNKHGVSRKKIAQMLDRYEYQMSISIVMNSVEPSHKSTQRPPPPQGRQRWGGSLGSHNRVCVTNNH.

Residues 162–197 (NSEKSEIDNELFQFYKEIEELEKEKDGFENSCKESE) are a coiled coil. The tract at residues 549–575 (EPSHKSTQRPPPPQGRQRWGGSLGSHN) is disordered.

This Homo sapiens (Human) protein is NEDD4-binding protein 2-like 2 (N4BP2L2).